The primary structure comprises 337 residues: tRNA N6-adenosine threonylcarbamoyltransferase (337 aa).

Fe cation contacts are provided by H111 and H115. Substrate-binding positions include 134–138 (LVSGG), D167, G180, and N272. D300 contacts Fe cation.

It belongs to the KAE1 / TsaD family. It depends on Fe(2+) as a cofactor.

Its subcellular location is the cytoplasm. It catalyses the reaction L-threonylcarbamoyladenylate + adenosine(37) in tRNA = N(6)-L-threonylcarbamoyladenosine(37) in tRNA + AMP + H(+). Functionally, required for the formation of a threonylcarbamoyl group on adenosine at position 37 (t(6)A37) in tRNAs that read codons beginning with adenine. Is involved in the transfer of the threonylcarbamoyl moiety of threonylcarbamoyl-AMP (TC-AMP) to the N6 group of A37, together with TsaE and TsaB. TsaD likely plays a direct catalytic role in this reaction. The polypeptide is tRNA N6-adenosine threonylcarbamoyltransferase (Cronobacter sakazakii (strain ATCC BAA-894) (Enterobacter sakazakii)).